The chain runs to 431 residues: Ornithine aminotransferase, mitochondrial (431 aa).

The residue at position 286 (Lys286) is an N6-(pyridoxal phosphate)lysine.

This sequence belongs to the class-III pyridoxal-phosphate-dependent aminotransferase family. As to quaternary structure, homotetramer. The cofactor is pyridoxal 5'-phosphate.

It localises to the mitochondrion matrix. The catalysed reaction is a 2-oxocarboxylate + L-ornithine = L-glutamate 5-semialdehyde + an L-alpha-amino acid. The protein operates within amino-acid biosynthesis; L-proline biosynthesis; L-glutamate 5-semialdehyde from L-ornithine: step 1/1. The sequence is that of Ornithine aminotransferase, mitochondrial (Oat) from Drosophila melanogaster (Fruit fly).